A 396-amino-acid polypeptide reads, in one-letter code: Acetate kinase (396 aa).

N7 contributes to the Mg(2+) binding site. K14 serves as a coordination point for ATP. R91 contacts substrate. The active-site Proton donor/acceptor is D148. ATP-binding positions include 208-212 (HLGNG), 283-285 (DFR), and 331-335 (GLGEN). E384 is a Mg(2+) binding site.

This sequence belongs to the acetokinase family. In terms of assembly, homodimer. It depends on Mg(2+) as a cofactor. Requires Mn(2+) as cofactor.

It is found in the cytoplasm. It catalyses the reaction acetate + ATP = acetyl phosphate + ADP. Its pathway is metabolic intermediate biosynthesis; acetyl-CoA biosynthesis; acetyl-CoA from acetate: step 1/2. Functionally, catalyzes the formation of acetyl phosphate from acetate and ATP. Can also catalyze the reverse reaction. The polypeptide is Acetate kinase (Alkaliphilus metalliredigens (strain QYMF)).